The following is a 231-amino-acid chain: MARLTKRLKSIKDKVQPGKVYAIDDAFEVLKSVSSVKFVESVDVAVNLGVDPRKSDQAVRGATVLPHGTGKSVRVAVFAQGANAEAALAAGADIVGMDDLGAQVKAGELNFDVVIAAPDAMRVVGQLGQILGPRGLMPNPKTGTVTPDVATAVKNAKAGQVRYRTDKKGIIHCTIGKISFDSAALKENLEALLADLKKLKPSTAKGVYVKKITVSSTMGPGLAVDQSTLAA.

Belongs to the universal ribosomal protein uL1 family. As to quaternary structure, part of the 50S ribosomal subunit.

Functionally, binds directly to 23S rRNA. The L1 stalk is quite mobile in the ribosome, and is involved in E site tRNA release. Protein L1 is also a translational repressor protein, it controls the translation of the L11 operon by binding to its mRNA. In Methylococcus capsulatus (strain ATCC 33009 / NCIMB 11132 / Bath), this protein is Large ribosomal subunit protein uL1.